A 271-amino-acid chain; its full sequence is Phosphatidylglycerol--prolipoprotein diacylglyceryl transferase (271 aa).

Transmembrane regions (helical) follow at residues 10 to 30, 56 to 76, 92 to 112, 120 to 140, 174 to 194, 202 to 222, and 237 to 257; these read VALA…LVGI, LVFW…VLFY, WKGG…ALWF, FFQL…AGRI, PSQL…LWLF, MAVS…VEFV, and LTMG…LIWL. Arg139 contributes to the a 1,2-diacyl-sn-glycero-3-phospho-(1'-sn-glycerol) binding site.

The protein belongs to the Lgt family.

The protein localises to the cell inner membrane. The catalysed reaction is L-cysteinyl-[prolipoprotein] + a 1,2-diacyl-sn-glycero-3-phospho-(1'-sn-glycerol) = an S-1,2-diacyl-sn-glyceryl-L-cysteinyl-[prolipoprotein] + sn-glycerol 1-phosphate + H(+). It functions in the pathway protein modification; lipoprotein biosynthesis (diacylglyceryl transfer). Catalyzes the transfer of the diacylglyceryl group from phosphatidylglycerol to the sulfhydryl group of the N-terminal cysteine of a prolipoprotein, the first step in the formation of mature lipoproteins. The sequence is that of Phosphatidylglycerol--prolipoprotein diacylglyceryl transferase from Pseudomonas fluorescens (strain Pf0-1).